Here is a 910-residue protein sequence, read N- to C-terminus: Leucine--tRNA ligase (910 aa).

The 'HIGH' region motif lies at 50–60 (PYTNGSLHVGH). A 'KMSKS' region motif is present at residues 611–615 (KISKS). K614 lines the ATP pocket.

It belongs to the class-I aminoacyl-tRNA synthetase family.

It is found in the cytoplasm. The catalysed reaction is tRNA(Leu) + L-leucine + ATP = L-leucyl-tRNA(Leu) + AMP + diphosphate. This chain is Leucine--tRNA ligase, found in Thermoplasma volcanium (strain ATCC 51530 / DSM 4299 / JCM 9571 / NBRC 15438 / GSS1).